Reading from the N-terminus, the 77-residue chain is LERQKNQNWYEGWFNSSPWFTTLLSTIAGPLLLLLLLLILGPCIINRLVQFINNRVSAVKILVLRQKYQTLDNEDNL.

The Extracellular segment spans residues 1–24; it reads LERQKNQNWYEGWFNSSPWFTTLL. Residues 25 to 45 form a helical membrane-spanning segment; the sequence is STIAGPLLLLLLLLILGPCII. A lipid anchor (S-palmitoyl cysteine; by host) is attached at cysteine 43. Topologically, residues 46-77 are cytoplasmic; it reads NRLVQFINNRVSAVKILVLRQKYQTLDNEDNL. The short motif at 68–71 is the YXXL motif; contains endocytosis signal element; the sequence is YQTL.

As to quaternary structure, the mature envelope protein (Env) consists of a trimer of SU-TM heterodimers attached by noncovalent interactions or by a labile interchain disulfide bond. In terms of processing, specific enzymatic cleavages in vivo yield mature proteins. Envelope glycoproteins are synthesized as an inactive precursor that is N-glycosylated and processed likely by host cell furin or by a furin-like protease in the Golgi to yield the mature SU and TM proteins. The cleavage site between SU and TM requires the minimal sequence [KR]-X-[KR]-R. The R-peptide is released from the C-terminus of the cytoplasmic tail of the TM protein upon particle formation as a result of proteolytic cleavage by the viral protease. Cleavage of this peptide is required for TM to become fusogenic. The transmembrane protein is palmitoylated. Post-translationally, the R-peptide is palmitoylated.

It is found in the virion membrane. The protein localises to the host cell membrane. Functionally, the surface protein (SU) attaches the virus to the host cell by binding to its receptor. This interaction triggers the refolding of the transmembrane protein (TM) and is thought to activate its fusogenic potential by unmasking its fusion peptide. Fusion occurs at the host cell plasma membrane. Its function is as follows. The transmembrane protein (TM) acts as a class I viral fusion protein. Under the current model, the protein has at least 3 conformational states: pre-fusion native state, pre-hairpin intermediate state, and post-fusion hairpin state. During viral and target cell membrane fusion, the coiled coil regions (heptad repeats) assume a trimer-of-hairpins structure, positioning the fusion peptide in close proximity to the C-terminal region of the ectodomain. The formation of this structure appears to drive apposition and subsequent fusion of viral and target cell membranes. Membranes fusion leads to delivery of the nucleocapsid into the cytoplasm. In Woolly monkey sarcoma virus (WMSV), this protein is Envelope glycoprotein (env).